The following is a 70-amino-acid chain: Small ribosomal subunit protein bS21 (70 aa).

It belongs to the bacterial ribosomal protein bS21 family.

This chain is Small ribosomal subunit protein bS21, found in Methylibium petroleiphilum (strain ATCC BAA-1232 / LMG 22953 / PM1).